A 337-amino-acid chain; its full sequence is 1-aminocyclopropane-1-carboxylate deaminase (337 aa).

The residue at position 50 (lysine 50) is an N6-(pyridoxal phosphate)lysine. The active-site Nucleophile is serine 77.

The protein belongs to the ACC deaminase/D-cysteine desulfhydrase family. As to quaternary structure, homotrimer. The cofactor is pyridoxal 5'-phosphate.

The enzyme catalyses 1-aminocyclopropane-1-carboxylate + H2O = 2-oxobutanoate + NH4(+). Its function is as follows. Catalyzes a cyclopropane ring-opening reaction, the irreversible conversion of 1-aminocyclopropane-1-carboxylate (ACC) to ammonia and alpha-ketobutyrate. Allows growth on ACC as a nitrogen source. In Allorhizobium ampelinum (strain ATCC BAA-846 / DSM 112012 / S4) (Agrobacterium vitis (strain S4)), this protein is 1-aminocyclopropane-1-carboxylate deaminase.